Reading from the N-terminus, the 397-residue chain is Protein-glutamate methylesterase/protein-glutamine glutaminase of group 2 operon (397 aa).

Residues 21–139 (RVMIVDDSVV…EASAADTFHH (119 aa)) enclose the Response regulatory domain. The residue at position 72 (aspartate 72) is a 4-aspartylphosphate. Residues 199–388 (PFSTLAPKVL…LPLNQIGAKV (190 aa)) enclose the CheB-type methylesterase domain. Catalysis depends on residues serine 213, histidine 241, and aspartate 337.

This sequence belongs to the CheB family. Phosphorylated by CheA. Phosphorylation of the N-terminal regulatory domain activates the methylesterase activity.

The protein resides in the cytoplasm. The enzyme catalyses [protein]-L-glutamate 5-O-methyl ester + H2O = L-glutamyl-[protein] + methanol + H(+). The catalysed reaction is L-glutaminyl-[protein] + H2O = L-glutamyl-[protein] + NH4(+). Functionally, involved in chemotaxis. Part of a chemotaxis signal transduction system that modulates chemotaxis in response to various stimuli. Catalyzes the demethylation of specific methylglutamate residues introduced into the chemoreceptors (methyl-accepting chemotaxis proteins or MCP) by CheR. Also mediates the irreversible deamidation of specific glutamine residues to glutamic acid. This Bradyrhizobium diazoefficiens (strain JCM 10833 / BCRC 13528 / IAM 13628 / NBRC 14792 / USDA 110) protein is Protein-glutamate methylesterase/protein-glutamine glutaminase of group 2 operon.